Reading from the N-terminus, the 309-residue chain is Porphobilinogen deaminase (309 aa).

Cys-244 bears the S-(dipyrrolylmethanemethyl)cysteine mark.

It belongs to the HMBS family. As to quaternary structure, monomer. Requires dipyrromethane as cofactor.

The enzyme catalyses 4 porphobilinogen + H2O = hydroxymethylbilane + 4 NH4(+). The protein operates within porphyrin-containing compound metabolism; protoporphyrin-IX biosynthesis; coproporphyrinogen-III from 5-aminolevulinate: step 2/4. Tetrapolymerization of the monopyrrole PBG into the hydroxymethylbilane pre-uroporphyrinogen in several discrete steps. In Listeria welshimeri serovar 6b (strain ATCC 35897 / DSM 20650 / CCUG 15529 / CIP 8149 / NCTC 11857 / SLCC 5334 / V8), this protein is Porphobilinogen deaminase.